Consider the following 123-residue polypeptide: MSKSIVFFSTVLVFLFSFSYATPGIATFYTSYTPCYRGTQEGVMIAAASDTLWDNGRVCGKMFTVKCSGPRNAVPHPCTGKSVKVKIVDHCPSGCASTLDLSREAFAQIANPVAGIINIDYFP.

The first 21 residues, 1–21, serve as a signal peptide directing secretion; that stretch reads MSKSIVFFSTVLVFLFSFSYA. The Expansin-like EG45 domain occupies 24–123; it reads GIATFYTSYT…AGIINIDYFP (100 aa).

Its subcellular location is the secreted. Its function is as follows. Might have a systemic role in water and solute homeostasis. The polypeptide is Putative EG45-like domain containing protein 1 (EGC1) (Arabidopsis thaliana (Mouse-ear cress)).